Here is an 89-residue protein sequence, read N- to C-terminus: ATP synthase subunit H, mitochondrial (89 aa).

F-type ATP synthases have 2 components, the catalytic core F(1) and the membrane-embedded component F(0), linked together by a central stalk and a peripheral stalk. The central stalk, also called rotor shaft, is often seen as part of F(1). The peripheral stalk is seen as part of F(0). F(0) contains the membrane channel next to the rotor. F-type ATP synthases form dimers but each monomer functions independently in ATP generation. The dimer consists of 18 different polypeptides: ATP1 (subunit alpha, part of F(1), 3 molecules per monomer), ATP2 (subunit beta, part of F(1), 3 molecules per monomer), ATP3 (subunit gamma, part of the central stalk), ATP4 (subunit b, part of the peripheral stalk), ATP5/OSCP (subunit 5/OSCP, part of the peripheral stalk), ATP6 (subunit a, part of the peripheral stalk), ATP7 (subunit d, part of the peripheral stalk), ATP8 (subunit 8, part of the peripheral stalk), OLI1 (subunit c, part of the rotor, 10 molecules per monomer), ATP14 (subunit H, part of the peripheral stalk), ATP15 (subunit epsilon, part of the central stalk), ATP16 (subunit delta, part of the central stalk), ATP17 (subunit f, part of the peripheral stalk), ATP18 (subunit i/j, part of the peripheral stalk). Dimer-specific subunits are ATP19 (subunit k, at interface between monomers), ATP20 (subunit g, at interface between monomers), TIM11 (subunit e, at interface between monomers). Also contains subunit L.

The protein resides in the mitochondrion inner membrane. Its function is as follows. Mitochondrial membrane ATP synthase (F(1)F(0) ATP synthase or Complex V) produces ATP from ADP in the presence of a proton gradient across the membrane which is generated by electron transport complexes of the respiratory chain. F-type ATP synthases consist of two structural domains, F(1) - containing the extramembraneous catalytic core, and F(0) - containing the membrane proton channel, linked together by a central stalk and a peripheral stalk. During catalysis, ATP synthesis in the catalytic domain of F(1) is coupled via a rotary mechanism of the central stalk subunits to proton translocation. Part of the peripheral stalk. This Pichia angusta (Yeast) protein is ATP synthase subunit H, mitochondrial.